Reading from the N-terminus, the 730-residue chain is Diacylglycerol kinase alpha (730 aa).

EF-hand domains follow at residues 111 to 146 (RPEDKLEFTFKLYDMDRNGILDSTEVEKIILQMMRV) and 156 to 191 (ELRPILQEMMREMDQDGSGSVSLDEWVRAGATTVPL). Residues Asp-124, Asp-126, Asn-128, Glu-135, Asp-169, Asp-171, Ser-173, Ser-175, and Glu-180 each coordinate Ca(2+). Phorbol-ester/DAG-type zinc fingers lie at residues 206 to 254 (NHIW…AQPC) and 270 to 320 (SHLW…GPEC). The DAGKc domain occupies 368–501 (SNTHPLLVFI…LDRWFLEVIP (134 aa)). Lys-479 bears the N6-acetyllysine mark.

Belongs to the eukaryotic diacylglycerol kinase family. In terms of assembly, monomer.

The protein localises to the cytoplasm. It is found in the cytosol. The catalysed reaction is a 1,2-diacyl-sn-glycerol + ATP = a 1,2-diacyl-sn-glycero-3-phosphate + ADP + H(+). The enzyme catalyses a 1-O-alkyl-sn-glycerol + ATP = a 1-O-alkyl-sn-glycero-3-phosphate + ADP + H(+). It carries out the reaction 1-O-alkyl-2-acyl-sn-glycerol + ATP = 1-O-alkyl-2-acyl-sn-glycero-3-phosphate + ADP + H(+). It catalyses the reaction 1,2-dihexadecanoyl-sn-glycerol + ATP = 1,2-dihexadecanoyl-sn-glycero-3-phosphate + ADP + H(+). The catalysed reaction is 1-hexadecanoyl-2-(9Z-octadecenoyl)-sn-glycerol + ATP = 1-hexadecanoyl-2-(9Z-octadecenoyl)-sn-glycero-3-phosphate + ADP + H(+). The enzyme catalyses 2-(9Z-octadecenoyl)-glycerol + ATP = 2-(9Z-octadecenoyl)-sn-glycero-3-phosphate + ADP + H(+). It carries out the reaction 1,2-di-(9Z-octadecenoyl)-sn-glycerol + ATP = 1,2-di-(9Z-octadecenoyl)-sn-glycero-3-phosphate + ADP + H(+). It catalyses the reaction 1-octadecanoyl-2-(5Z,8Z,11Z,14Z-eicosatetraenoyl)-sn-glycerol + ATP = 1-octadecanoyl-2-(5Z,8Z,11Z,14Z-eicosatetraenoyl)-sn-glycero-3-phosphate + ADP + H(+). The catalysed reaction is 1,2-didecanoyl-sn-glycerol + ATP = 1,2-didecanoyl-sn-glycero-3-phosphate + ADP + H(+). The enzyme catalyses 1-O-hexadecyl-2-acetyl-sn-glycerol + ATP = 1-O-hexadecyl-2-acetyl-sn-glycero-3-phosphate + ADP + H(+). It carries out the reaction 1-O-hexadecyl-2-(5Z,8Z,11Z,14Z-eicosatetraenoyl)-sn-glycerol + ATP = 1-O-hexadecyl-2-(5Z,8Z,11Z,14Z-eicosatetraenoyl)-sn-glycero-3-phosphate + ADP + H(+). It catalyses the reaction 1-O-hexadecyl-2-(9Z-octadecenoyl)-sn-glycerol + ATP = 1-O-hexadecyl-2-(9Z-octadecenoyl)-sn-glycero-3-phosphate + ADP + H(+). The catalysed reaction is 1-O-hexadecyl-sn-glycerol + ATP = 1-O-hexadecyl-sn-glycero-3-phosphate + ADP + H(+). It functions in the pathway lipid metabolism; glycerolipid metabolism. With respect to regulation, stimulated by calcium and phosphatidylserine. Diacylglycerol kinase that converts diacylglycerol/DAG into phosphatidic acid/phosphatidate/PA and regulates the respective levels of these two bioactive lipids. Thereby, acts as a central switch between the signaling pathways activated by these second messengers with different cellular targets and opposite effects in numerous biological processes. Also plays an important role in the biosynthesis of complex lipids. Can also phosphorylate 1-alkyl-2-acylglycerol in vitro as efficiently as diacylglycerol provided it contains an arachidonoyl group. Also involved in the production of alkyl-lysophosphatidic acid, another bioactive lipid, through the phosphorylation of 1-alkyl-2-acetyl glycerol. This chain is Diacylglycerol kinase alpha (Dgka), found in Mus musculus (Mouse).